The sequence spans 264 residues: 3-methyl-2-oxobutanoate hydroxymethyltransferase (264 aa).

Mg(2+) contacts are provided by D45 and D84. 3-methyl-2-oxobutanoate contacts are provided by residues 45 to 46 (DS), D84, and K112. Mg(2+) is bound at residue E114. E181 serves as the catalytic Proton acceptor.

This sequence belongs to the PanB family. In terms of assembly, homodecamer; pentamer of dimers. The cofactor is Mg(2+).

Its subcellular location is the cytoplasm. The enzyme catalyses 3-methyl-2-oxobutanoate + (6R)-5,10-methylene-5,6,7,8-tetrahydrofolate + H2O = 2-dehydropantoate + (6S)-5,6,7,8-tetrahydrofolate. The protein operates within cofactor biosynthesis; (R)-pantothenate biosynthesis; (R)-pantoate from 3-methyl-2-oxobutanoate: step 1/2. Catalyzes the reversible reaction in which hydroxymethyl group from 5,10-methylenetetrahydrofolate is transferred onto alpha-ketoisovalerate to form ketopantoate. The polypeptide is 3-methyl-2-oxobutanoate hydroxymethyltransferase (Shewanella amazonensis (strain ATCC BAA-1098 / SB2B)).